The primary structure comprises 455 residues: P2X purinoceptor 5 (455 aa).

Topologically, residues 1–30 are cytoplasmic; the sequence is MGQAAWKGFVLSLFDYKTAKFVVAKSKKVG. The chain crosses the membrane as a helical span at residues 31-50; the sequence is LLYRVLQLTILLYLLIWVFL. At 51-339 the chain is on the extracellular side; sequence IKKSYQDIDT…KFSIIPTVIN (289 aa). 69–71 provides a ligand contact to ATP; it reads KVK. N-linked (GlcNAc...) asparagine glycosylation is present at Asn77. 3 cysteine pairs are disulfide-bonded: Cys118–Cys169, Cys129–Cys152, and Cys135–Cys163. Residue Asn157 is glycosylated (N-linked (GlcNAc...) asparagine). Residue Thr189 coordinates ATP. Asn202 carries an N-linked (GlcNAc...) asparagine glycan. 2 disulfides stabilise this stretch: Cys220–Cys229 and Cys263–Cys272. Residues 294–296 and Lys314 each bind ATP; that span reads NFR. The helical transmembrane segment at 340-362 threads the bilayer; that stretch reads IGSGLALMGAGAFFCDLVLIYLI. Residues 363 to 455 lie on the Cytoplasmic side of the membrane; the sequence is RKSEFYRDKK…PSQILQTVKT (93 aa).

The protein belongs to the P2X receptor family. As to quaternary structure, functional P2XRs are organized as homomeric and heteromeric trimers. Homotrimer. Forms heterotrimer with P2RX1. In terms of tissue distribution, expressed in a number of tissues, with highest levels detected in heart and kidney.

It is found in the cell membrane. It catalyses the reaction Na(+)(in) = Na(+)(out). The catalysed reaction is Ca(2+)(in) = Ca(2+)(out). It carries out the reaction chloride(in) = chloride(out). Activated by ATP. Slowly desensitizing. Not activated by ATP agonist alpha/beta-methylene-ATP. Highly sensitive to the antagonists suramin and PPADS. Its function is as follows. ATP-gated nonselective transmembrane cation channel permeable to potassium, sodium and calcium. Unlike other P2RX receptors, the P2X5 receptor is also permeable to chloride. Acts as an important regulator of inflammatory-related bone loss and osteoclast multinucleation. In Mus musculus (Mouse), this protein is P2X purinoceptor 5.